The sequence spans 120 residues: Large ribosomal subunit protein uL18 (120 aa).

The protein belongs to the universal ribosomal protein uL18 family. In terms of assembly, part of the 50S ribosomal subunit; part of the 5S rRNA/L5/L18/L25 subcomplex. Contacts the 5S and 23S rRNAs.

Functionally, this is one of the proteins that bind and probably mediate the attachment of the 5S RNA into the large ribosomal subunit, where it forms part of the central protuberance. This Rhizobium etli (strain ATCC 51251 / DSM 11541 / JCM 21823 / NBRC 15573 / CFN 42) protein is Large ribosomal subunit protein uL18.